The primary structure comprises 252 residues: Floral homeotic protein AGAMOUS (252 aa).

The region spanning 19 to 73 (RGKIEIKRIENTTNRQVTFCKRRNGLLKKAYELSVLCDAEVALIVFSSRGRLYEY) is the MADS-box domain. Positions 103–193 (AQYYQQESAK…RAKIAENERN (91 aa)) constitute a K-box domain.

It is found in the nucleus. Functionally, probable transcription factor involved in regulating genes that determines stamen and carpel development in wild-type flowers. This chain is Floral homeotic protein AGAMOUS (AG1), found in Brassica napus (Rape).